Reading from the N-terminus, the 22-residue chain is Short-chain-enoyl-CoA hydratase (22 aa).

The protein belongs to the enoyl-CoA hydratase/isomerase family.

The catalysed reaction is a short-chain (3S)-3-hydroxyacyl-CoA = a short-chain (2E)-enoyl-CoA + H2O. It functions in the pathway lipid metabolism; butanoate metabolism. The sequence is that of Short-chain-enoyl-CoA hydratase (crt) from Clostridium pasteurianum.